The following is a 217-amino-acid chain: uncharacterized protein (217 aa).

Transmembrane regions (helical) follow at residues 4–23 (IYGIFAFVVLVFFYLLGKET), 44–66 (NVVILSVIAFIGVGIFTAYLTWV), 76–98 (TVETAGLTATAFLLGGIFGSIII), 111–128 (FLYLCFIISAVLFYIHAI), 132–154 (MAMVAAVLFVLGFFFISALPLAL), 166–188 (AGTANSSLWLFSQVGSVVLIVLF), and 198–215 (LLLSAGLLAVSFLLALQL).

It localises to the cell membrane. This is an uncharacterized protein from Archaeoglobus fulgidus (strain ATCC 49558 / DSM 4304 / JCM 9628 / NBRC 100126 / VC-16).